We begin with the raw amino-acid sequence, 826 residues long: Periplasmic nitrate reductase (826 aa).

Residues 1–32 (MSISRREFLKANAAVAAATAVGATLPVKIVEA) constitute a signal peptide (tat-type signal). The 57-residue stretch at 39–95 (IKWDKAPCRFCGVGCSVLVGTDNGKVVATKGDPESPVNKGLNCIKGYFLSKIMYGKD) folds into the 4Fe-4S Mo/W bis-MGD-type domain. Residues cysteine 46, cysteine 49, cysteine 53, and cysteine 81 each coordinate [4Fe-4S] cluster. Residues lysine 83, glutamine 150, asparagine 175, cysteine 179, 212-219 (WGANMAEM), 262-264 (QSD), methionine 372, glutamine 376, asparagine 482, 508-509 (SD), lysine 531, aspartate 558, and 716-725 (TGRVLEHWHT) contribute to the Mo-bis(molybdopterin guanine dinucleotide) site. Phenylalanine 792 lines the substrate pocket. Asparagine 800 and lysine 817 together coordinate Mo-bis(molybdopterin guanine dinucleotide).

Belongs to the prokaryotic molybdopterin-containing oxidoreductase family. NasA/NapA/NarB subfamily. As to quaternary structure, component of the periplasmic nitrate reductase NapAB complex composed of NapA and NapB. Requires [4Fe-4S] cluster as cofactor. The cofactor is Mo-bis(molybdopterin guanine dinucleotide). Predicted to be exported by the Tat system. The position of the signal peptide cleavage has not been experimentally proven.

It localises to the periplasm. It carries out the reaction 2 Fe(II)-[cytochrome] + nitrate + 2 H(+) = 2 Fe(III)-[cytochrome] + nitrite + H2O. In terms of biological role, catalytic subunit of the periplasmic nitrate reductase complex NapAB. Receives electrons from NapB and catalyzes the reduction of nitrate to nitrite. The polypeptide is Periplasmic nitrate reductase (Shewanella halifaxensis (strain HAW-EB4)).